The chain runs to 130 residues: MRHRHGLRKLNRTSSHRLAMLRNMSNSLIEHEVIKTTLPKAKELRKVVEPLITLGKKPSLANRRLAFNRLRDRDSVTKLFEVLGPRYATRPGGYLRVLKFGFRVGDNAPMALVELLDRPEVEEVEVQEAE.

This sequence belongs to the bacterial ribosomal protein bL17 family. Part of the 50S ribosomal subunit. Contacts protein L32.

This chain is Large ribosomal subunit protein bL17, found in Paraburkholderia xenovorans (strain LB400).